A 707-amino-acid polypeptide reads, in one-letter code: MNYSLFISCSKGLEYLLEDELKGLGLHVTQVSPQGVYGEASLPVIYNLCLWSRLANRIQLILFSGHAAKEQAVHQLCTDFHWQTVFTHDKTIAIEFHGASEQIRNTMFGAQIVKDGIVDHFRRLNGSRPSVDKEKPQILIHAHLKNDILTVSFDLVGYSLHQRGYRKKAGKAPLKENVAAAMLLRAKWPELAAQGYGLHDPFCGSGTLVIEAAMMAAHIAPGLLRQDQSLQYWARHQSSLWEKLRTQALQQVKPLAVKLVGTDADGKIITLARSNAERAGVLPLVEFNTLPLNACRPGTKKGLVVCNPPYGERLGEVTQLVPLYQQLGTTLHTCYQGWQAAILTSSPVLAKALGLRADKQYTLYNGPLECKLYCLTLSAANKLKNTPNAPLSDNAQMLFNRLEKNRNHLQKWARKNQITCYRIYDADLPEYAYAIDIYNDYAVLQEYAPPASIPVHKAEKRSLEMLQVVPRALGIHPEKLIVKQRKQQKGSEQYQKIGKTSQRLIVTEGKAKLIVNLYDYLDTGLFLDHRLMRLKFAQLEPGTRFLNCFCYTASASVHAALAGALTTNVDLSKTYLLWAEDNFRLNDIDLSKHQFLQYDCKEWMKITRDKFDVIFLDPPSFSNSKRMSDILDIQRDHVSLINMAMRLLNPNGVLYFSTNLRQFKLEPMLKEKYAVQDITPQTIDQDFKRNSKIHHCFKIVMPHFADN.

Residues 44 to 155 (VIYNLCLWSR…NDILTVSFDL (112 aa)) enclose the THUMP domain.

This sequence belongs to the methyltransferase superfamily. RlmKL family.

It is found in the cytoplasm. It carries out the reaction guanosine(2445) in 23S rRNA + S-adenosyl-L-methionine = N(2)-methylguanosine(2445) in 23S rRNA + S-adenosyl-L-homocysteine + H(+). The enzyme catalyses guanosine(2069) in 23S rRNA + S-adenosyl-L-methionine = N(2)-methylguanosine(2069) in 23S rRNA + S-adenosyl-L-homocysteine + H(+). Its function is as follows. Specifically methylates the guanine in position 2445 (m2G2445) and the guanine in position 2069 (m7G2069) of 23S rRNA. This is Ribosomal RNA large subunit methyltransferase K/L from Legionella pneumophila (strain Corby).